The following is a 941-amino-acid chain: Glycine dehydrogenase (decarboxylating) (941 aa).

Lys692 bears the N6-(pyridoxal phosphate)lysine mark.

Belongs to the GcvP family. As to quaternary structure, the glycine cleavage system is composed of four proteins: P, T, L and H. Pyridoxal 5'-phosphate serves as cofactor.

The enzyme catalyses N(6)-[(R)-lipoyl]-L-lysyl-[glycine-cleavage complex H protein] + glycine + H(+) = N(6)-[(R)-S(8)-aminomethyldihydrolipoyl]-L-lysyl-[glycine-cleavage complex H protein] + CO2. Its function is as follows. The glycine cleavage system catalyzes the degradation of glycine. The P protein binds the alpha-amino group of glycine through its pyridoxal phosphate cofactor; CO(2) is released and the remaining methylamine moiety is then transferred to the lipoamide cofactor of the H protein. The protein is Glycine dehydrogenase (decarboxylating) of Mycobacterium tuberculosis (strain ATCC 25177 / H37Ra).